Consider the following 106-residue polypeptide: Large ribosomal subunit protein P1B (106 aa).

An N-acetylserine modification is found at S2. Residues 69 to 82 (AGAASGAAAAGGDA) show a composition bias toward low complexity. Positions 69–106 (AGAASGAAAAGGDAAAEEEKEEEAAEESDDDMGFGLFD) are disordered. Over residues 83–100 (AAEEEKEEEAAEESDDDM) the composition is skewed to acidic residues. Position 96 is a phosphoserine (S96).

Belongs to the eukaryotic ribosomal protein P1/P2 family. As to quaternary structure, component of the large ribosomal subunit (LSU). Mature yeast ribosomes consist of a small (40S) and a large (60S) subunit. The 40S small subunit contains 1 molecule of ribosomal RNA (18S rRNA) and 33 different proteins (encoded by 57 genes). The large 60S subunit contains 3 rRNA molecules (25S, 5.8S and 5S rRNA) and 46 different proteins (encoded by 81 genes). The 5 acidic ribosomal P-proteins form the stalk structure of the 60S subunit. They are organized as a pentameric complex in which uL10/P0 interacts with 2 heterodimers, P1A-P2B and P1B-P2A.

It is found in the cytoplasm. Component of the ribosome, a large ribonucleoprotein complex responsible for the synthesis of proteins in the cell. The small ribosomal subunit (SSU) binds messenger RNAs (mRNAs) and translates the encoded message by selecting cognate aminoacyl-transfer RNA (tRNA) molecules. The large subunit (LSU) contains the ribosomal catalytic site termed the peptidyl transferase center (PTC), which catalyzes the formation of peptide bonds, thereby polymerizing the amino acids delivered by tRNAs into a polypeptide chain. The nascent polypeptides leave the ribosome through a tunnel in the LSU and interact with protein factors that function in enzymatic processing, targeting, and the membrane insertion of nascent chains at the exit of the ribosomal tunnel. This chain is Large ribosomal subunit protein P1B, found in Saccharomyces cerevisiae (strain ATCC 204508 / S288c) (Baker's yeast).